Here is a 203-residue protein sequence, read N- to C-terminus: Lipoprotein MlpJ (203 aa).

The signal sequence occupies residues 1 to 17 (MKIINILFCISLLLLNS). Cysteine 18 carries N-palmitoyl cysteine lipidation. Cysteine 18 carries the S-diacylglycerol cysteine lipid modification. Residues 26–47 (LKNNAQQTKSRKKRDLSQEELP) are disordered.

The protein belongs to the Multicopy lipoprotein (Mlp) family.

The protein resides in the cell outer membrane. Functionally, an outer membrane protein that may participate in pathogenesis. Some human Lyme disease patients have antibodies against this protein. The Mlp proteins probably undergo intragenic recombination, generating new alleles. The sequence is that of Lipoprotein MlpJ from Borreliella burgdorferi (strain ATCC 35210 / DSM 4680 / CIP 102532 / B31) (Borrelia burgdorferi).